A 101-amino-acid chain; its full sequence is Small ribosomal subunit protein uS14 (101 aa).

This sequence belongs to the universal ribosomal protein uS14 family. Part of the 30S ribosomal subunit. Contacts proteins S3 and S10.

Functionally, binds 16S rRNA, required for the assembly of 30S particles and may also be responsible for determining the conformation of the 16S rRNA at the A site. In Haemophilus ducreyi (strain 35000HP / ATCC 700724), this protein is Small ribosomal subunit protein uS14.